A 420-amino-acid polypeptide reads, in one-letter code: Gamma-glutamyl phosphate reductase (420 aa).

Belongs to the gamma-glutamyl phosphate reductase family.

The protein localises to the cytoplasm. The catalysed reaction is L-glutamate 5-semialdehyde + phosphate + NADP(+) = L-glutamyl 5-phosphate + NADPH + H(+). It participates in amino-acid biosynthesis; L-proline biosynthesis; L-glutamate 5-semialdehyde from L-glutamate: step 2/2. Catalyzes the NADPH-dependent reduction of L-glutamate 5-phosphate into L-glutamate 5-semialdehyde and phosphate. The product spontaneously undergoes cyclization to form 1-pyrroline-5-carboxylate. The sequence is that of Gamma-glutamyl phosphate reductase from Cereibacter sphaeroides (strain ATCC 17029 / ATH 2.4.9) (Rhodobacter sphaeroides).